We begin with the raw amino-acid sequence, 207 residues long: Anthranilate synthase component II (207 aa).

Residues 17 to 207 form the Glutamine amidotransferase type-1 domain; that stretch reads RVLFVDNFDS…DVIRNFLAGL (191 aa). 66-68 is a binding site for L-glutamine; the sequence is GPG. Cys96 serves as the catalytic Nucleophile; for GATase activity. 146-147 contacts L-glutamine; the sequence is SL. Residues His187 and Glu189 contribute to the active site.

As to quaternary structure, tetramer of two components I and two components II.

The enzyme catalyses chorismate + L-glutamine = anthranilate + pyruvate + L-glutamate + H(+). Its pathway is amino-acid biosynthesis; L-tryptophan biosynthesis; L-tryptophan from chorismate: step 1/5. The sequence is that of Anthranilate synthase component II (trpG1) from Haloarcula marismortui (strain ATCC 43049 / DSM 3752 / JCM 8966 / VKM B-1809) (Halobacterium marismortui).